The chain runs to 214 residues: Protein GrpE (214 aa).

A compositionally biased stretch (polar residues) spans 1–13 (MKHTSEPTSQPDT). The segment at 1–61 (MKHTSEPTSQ…AAVAEATIEP (61 aa)) is disordered. Positions 14-57 (QAAESAQSSAAAAGQAASAYSSQAQRASADAQAIAGDEAAVAEA) are enriched in low complexity.

Belongs to the GrpE family. In terms of assembly, homodimer.

It localises to the cytoplasm. In terms of biological role, participates actively in the response to hyperosmotic and heat shock by preventing the aggregation of stress-denatured proteins, in association with DnaK and GrpE. It is the nucleotide exchange factor for DnaK and may function as a thermosensor. Unfolded proteins bind initially to DnaJ; upon interaction with the DnaJ-bound protein, DnaK hydrolyzes its bound ATP, resulting in the formation of a stable complex. GrpE releases ADP from DnaK; ATP binding to DnaK triggers the release of the substrate protein, thus completing the reaction cycle. Several rounds of ATP-dependent interactions between DnaJ, DnaK and GrpE are required for fully efficient folding. This is Protein GrpE from Ralstonia nicotianae (strain ATCC BAA-1114 / GMI1000) (Ralstonia solanacearum).